The following is a 543-amino-acid chain: Glutamyl-tRNA(Gln) amidotransferase subunit A, chloroplastic/mitochondrial (543 aa).

Residues K121 and S196 each act as charge relay system in the active site. The active-site Acyl-ester intermediate is the S220.

The protein belongs to the amidase family. GatA subfamily. Subunit of the heterotrimeric GatCAB amidotransferase (AdT) complex, composed of A, B and C subunits.

It is found in the mitochondrion. The protein resides in the plastid. The protein localises to the chloroplast stroma. It catalyses the reaction L-glutamyl-tRNA(Gln) + L-glutamine + ATP + H2O = L-glutaminyl-tRNA(Gln) + L-glutamate + ADP + phosphate + H(+). Allows the formation of correctly charged Gln-tRNA(Gln) through the transamidation of misacylated Glu-tRNA(Gln) in chloroplasts and mitochondria. The reaction takes place in the presence of glutamine and ATP through an activated gamma-phospho-Glu-tRNA(Gln). The sequence is that of Glutamyl-tRNA(Gln) amidotransferase subunit A, chloroplastic/mitochondrial from Zea mays (Maize).